The sequence spans 182 residues: Small ribosomal subunit protein uS4c (182 aa).

The S4 RNA-binding domain maps to 82–143 (MRLDNILFRL…KERSKVLIQN (62 aa)).

The protein belongs to the universal ribosomal protein uS4 family. Part of the 30S ribosomal subunit. Contacts protein S5. The interaction surface between S4 and S5 is involved in control of translational fidelity.

It is found in the plastid. The protein resides in the chloroplast. Functionally, one of the primary rRNA binding proteins, it binds directly to 16S rRNA where it nucleates assembly of the body of the 30S subunit. Its function is as follows. With S5 and S12 plays an important role in translational accuracy. This is Small ribosomal subunit protein uS4c (rps4) from Alophia veracruzana (Mexican pine woods lily).